Consider the following 310-residue polypeptide: Probable plastid-lipid-associated protein 2, chloroplastic (310 aa).

The N-terminal 59 residues, 1–59 (MATVQLSTQFSCQTRVSISPNSKSISKPPFLVPVTSIIHRPMISTGGIAVSPRRVFKVR), are a transit peptide targeting the chloroplast. Threonine 61 is modified (phosphothreonine). A coiled-coil region spans residues 65–94 (EIGSALLAAEEAIEDVEETERLKRSLVDSL).

The protein belongs to the PAP/fibrillin family.

It localises to the plastid. It is found in the chloroplast. The protein resides in the plastoglobule. Functionally, probably involved in light/cold stress-related jasmonate (JA) biosynthesis. The sequence is that of Probable plastid-lipid-associated protein 2, chloroplastic (PAP2) from Arabidopsis thaliana (Mouse-ear cress).